We begin with the raw amino-acid sequence, 206 residues long: Tektin bundle-interacting protein 1 (206 aa).

Microtubule inner protein component of sperm flagellar doublet microtubules.

The protein localises to the cytoplasm. It is found in the cytoskeleton. The protein resides in the cilium axoneme. Its subcellular location is the flagellum axoneme. In terms of biological role, microtubule inner protein (MIP) part of the dynein-decorated doublet microtubules (DMTs) in cilia axoneme, which is required for motile cilia beating. Located at the center of the tektin bundle where may function to recruit tektins or stabilize the bundle. This Mus musculus (Mouse) protein is Tektin bundle-interacting protein 1.